The primary structure comprises 128 residues: Aspartate 1-decarboxylase (128 aa).

Ser25 (schiff-base intermediate with substrate; via pyruvic acid) is an active-site residue. Ser25 carries the post-translational modification Pyruvic acid (Ser). Residue Thr57 participates in substrate binding. Catalysis depends on Tyr58, which acts as the Proton donor. 73–75 is a substrate binding site; it reads GAA.

Belongs to the PanD family. As to quaternary structure, heterooctamer of four alpha and four beta subunits. The cofactor is pyruvate. Post-translationally, is synthesized initially as an inactive proenzyme, which is activated by self-cleavage at a specific serine bond to produce a beta-subunit with a hydroxyl group at its C-terminus and an alpha-subunit with a pyruvoyl group at its N-terminus.

Its subcellular location is the cytoplasm. The enzyme catalyses L-aspartate + H(+) = beta-alanine + CO2. It participates in cofactor biosynthesis; (R)-pantothenate biosynthesis; beta-alanine from L-aspartate: step 1/1. Its function is as follows. Catalyzes the pyruvoyl-dependent decarboxylation of aspartate to produce beta-alanine. This is Aspartate 1-decarboxylase from Staphylococcus epidermidis (strain ATCC 35984 / DSM 28319 / BCRC 17069 / CCUG 31568 / BM 3577 / RP62A).